Consider the following 535-residue polypeptide: Hrp65 protein (535 aa).

A disordered region spans residues 1–80; the sequence is MDVKAEAPNG…GMGPRGPMKN (80 aa). Composition is skewed to low complexity over residues 27–42 and 50–64; these read ENMN…QNNN and NKRN…FQNR. A compositionally biased stretch (gly residues) spans 65-74; sequence GGKGGPGMGP. 2 RRM domains span residues 113–185 and 187–268; these read NRLY…FAPN and TTIR…TFDH. Disordered regions lie at residues 346-411 and 429-535; these read EHET…RRQQ and QEMN…RRRY. Over residues 434–459 the composition is skewed to gly residues; it reads QGGGGGGGNGGNGNNQGGGGNQGGGR. Residues 486-502 show a composition bias toward low complexity; sequence GNQYQGNQHYQGNQDQG. Basic and acidic residues predominate over residues 521-535; that stretch reads DRGHRDDFQNKRRRY.

The protein localises to the cytoplasm. The protein resides in the cytoskeleton. Its subcellular location is the nucleus. Component of nuclear connecting fibers associated with the transport of ribonucleoprotein particles from either the chromosome to the nuclear pore complex or their transient retention in the nucleoplasm. This is Hrp65 protein (HRP65) from Chironomus tentans (Midge).